Consider the following 319-residue polypeptide: D-alanine--D-alanine ligase B (319 aa).

In terms of domain architecture, ATP-grasp spans 117–312; sequence KRVWLSLGLP…FQQLVLAILA (196 aa). 143–198 contacts ATP; the sequence is AQRLGFPLIVKPAHEGSSIGMAKVGGLDELIAAWREAARYDSQVLVEQWISGPEFT. Mg(2+)-binding residues include Asp-266, Glu-279, and Asn-281.

It belongs to the D-alanine--D-alanine ligase family. Mg(2+) is required as a cofactor. Mn(2+) serves as cofactor.

It is found in the cytoplasm. It catalyses the reaction 2 D-alanine + ATP = D-alanyl-D-alanine + ADP + phosphate + H(+). The protein operates within cell wall biogenesis; peptidoglycan biosynthesis. Its function is as follows. Cell wall formation. The sequence is that of D-alanine--D-alanine ligase B from Pseudomonas aeruginosa (strain ATCC 15692 / DSM 22644 / CIP 104116 / JCM 14847 / LMG 12228 / 1C / PRS 101 / PAO1).